A 540-amino-acid chain; its full sequence is Exopolysaccharide phosphotransferase SCO6022 (540 aa).

It belongs to the stealth family.

The polypeptide is Exopolysaccharide phosphotransferase SCO6022 (Streptomyces coelicolor (strain ATCC BAA-471 / A3(2) / M145)).